The primary structure comprises 310 residues: Putative HTH-type transcriptional regulatory protein LS215_1371 (310 aa).

Positions 125-180 (LKHKREEMGYSIGDVAKFLGVSRKAIYDYEKGDSDVSLEVAEKLIDLFGDDIIGDV) constitute an HTH cro/C1-type domain. Positions 136–155 (IGDVAKFLGVSRKAIYDYEK) form a DNA-binding region, H-T-H motif.

This chain is Putative HTH-type transcriptional regulatory protein LS215_1371, found in Saccharolobus islandicus (strain L.S.2.15 / Lassen #1) (Sulfolobus islandicus).